A 505-amino-acid polypeptide reads, in one-letter code: Outer capsid protein VP5 (505 aa).

The segment at 1-42 (MGKFTSFLKRAGSATKKALTSDAAKRMYKMAGKTLQKVVESE) is involved in membrane permeabilization.

Belongs to the orbivirus VP5 family.

The protein resides in the virion. VP5 protein is one of the two proteins (with VP2) which constitute the virus particle outer capsid. Acts as a membrane permeabilization protein that mediates release of viral particles from endosomal compartments into the cytoplasm. Permeabilization activity is probably negatively regulated by VP2 and is triggered by endosomal degradation of VP2 and exposure to low pH. This African horse sickness virus 9 (AHSV-9) protein is Outer capsid protein VP5 (Segment-6).